Consider the following 200-residue polypeptide: Inducible T-cell costimulator (200 aa).

The signal sequence occupies residues 1–20 (MKPYFSCVFVFCFLIKLLTG). At 21-145 (ELNDLANHRM…LCCQLKLWLP (125 aa)) the chain is on the extracellular side. Residues 30-133 (MFSFHDGGVQ…LSGGYLLIYE (104 aa)) enclose the Ig-like V-type domain. Intrachain disulfides connect Cys-42–Cys-109 and Cys-63–Cys-83. N-linked (GlcNAc...) asparagine glycosylation is found at Asn-89 and Asn-123. The helical transmembrane segment at 146–166 (VGCAAFVAALLFGCIFIVWFA) threads the bilayer. At 167–200 (KKKYRSSVHDPNSEYMFMAAVNTNKKSRLAGMTS) the chain is on the cytoplasmic side.

Homodimer; disulfide-linked. Interacts with ICOSLG. Interacts with PIK3R1. Interacts with TBK1; this interaction is critical for the maturation of T follicular regulatory cells. Post-translationally, N-glycosylated. In terms of tissue distribution, strongly expressed in the spleen and lung. Lower expression seen in liver, kidney and testis.

It is found in the cell membrane. Its function is as follows. Stimulatory receptor expressed in activated or antigen-experienced T-cells that plays an important role in the immune response. Upon binding to its ligand ICOSL expressed on antigen presenting cells (APCs), delivers costimulatory signals that enhances all basic T-cell responses to a foreign antigen, namely proliferation, secretion of lymphokines including IL10, up-regulation of molecules that mediate cell-cell interaction, and effective help for antibody secretion by B-cells. Also acts as a costimulatory receptor critical for the differentiation of T follicular regulatory cells upon immune challenges such as viral infection. Mechanistically, potentiates TCR-induced calcium flux by augmenting PLCG1 activation and actin remodeling. In addition, activates PI3K signaling pathways independently of calcium flux. Essential both for efficient interaction between T and B-cells and for normal antibody responses to T-cell dependent antigens. Prevents the apoptosis of pre-activated T-cells. Plays a critical role in CD40-mediated class switching of immunoglobin isotypes. The protein is Inducible T-cell costimulator (Icos) of Rattus norvegicus (Rat).